Here is a 237-residue protein sequence, read N- to C-terminus: Carboxy-S-adenosyl-L-methionine synthase (237 aa).

Residues Tyr40, 65–67 (GCS), 116–117 (DI), Asn131, and Arg194 contribute to the S-adenosyl-L-methionine site.

This sequence belongs to the class I-like SAM-binding methyltransferase superfamily. Cx-SAM synthase family. In terms of assembly, homodimer.

It catalyses the reaction prephenate + S-adenosyl-L-methionine = carboxy-S-adenosyl-L-methionine + 3-phenylpyruvate + H2O. Its function is as follows. Catalyzes the conversion of S-adenosyl-L-methionine (SAM) to carboxy-S-adenosyl-L-methionine (Cx-SAM). This Dichelobacter nodosus (strain VCS1703A) protein is Carboxy-S-adenosyl-L-methionine synthase.